A 488-amino-acid polypeptide reads, in one-letter code: Centrosomal protein cep57l1 (488 aa).

The stretch at 71–226 (LESEKTHARD…AQVQTSLEVN (156 aa)) forms a coiled coil. 2 disordered regions span residues 232-272 (SASS…PPSK) and 311-342 (PRVSQKDPKTVEHKPSILPGGSRSIPTRLMSS). Over residues 241–250 (RKVKKKKQSK) the composition is skewed to basic residues. Basic and acidic residues-rich tracts occupy residues 259–270 (PSSKEPLSKEPP) and 314–325 (SQKDPKTVEHKP). Positions 377–403 (KNTDMREDLERELDYLVKQMEIKSDQI) form a coiled coil. The segment at 416–464 (LKKTAKKQPRPPSTTKPAEDEQNIGATDPCTPRNKGNLANGTGTPNSKA) is disordered. A compositionally biased stretch (polar residues) spans 452–464 (NLANGTGTPNSKA).

Belongs to the translokin family. As to quaternary structure, interacts with clip1, mis12, ndc80 and zwint. Interacts with gamma-tubulin.

It is found in the cytoplasm. It localises to the cytoskeleton. The protein resides in the microtubule organizing center. Its subcellular location is the centrosome. The protein localises to the chromosome. It is found in the centromere. It localises to the kinetochore. The protein resides in the spindle. Required for spindle microtubule attachment to both kinetochores and centrosomes. Also functions to tether minus-ends of spindle microtubules to centrosomes. May act by forming ring-like structures around microtubules, or by serving as a cross-linker or scaffold at the attachment site. The chain is Centrosomal protein cep57l1 (cep57l1) from Xenopus laevis (African clawed frog).